Here is a 444-residue protein sequence, read N- to C-terminus: CCA-adding enzyme (444 aa).

ATP is bound by residues serine 57 and arginine 60. CTP-binding residues include serine 57 and arginine 60. Mg(2+) contacts are provided by aspartate 69, aspartate 71, and aspartate 124. Positions 147, 168, and 177 each coordinate ATP. Positions 147, 168, and 177 each coordinate CTP.

Belongs to the tRNA nucleotidyltransferase/poly(A) polymerase family. Archaeal CCA-adding enzyme subfamily. Homodimer. It depends on Mg(2+) as a cofactor.

It catalyses the reaction a tRNA precursor + 2 CTP + ATP = a tRNA with a 3' CCA end + 3 diphosphate. The enzyme catalyses a tRNA with a 3' CCA end + 2 CTP + ATP = a tRNA with a 3' CCACCA end + 3 diphosphate. Its function is as follows. Catalyzes the addition and repair of the essential 3'-terminal CCA sequence in tRNAs without using a nucleic acid template. Adds these three nucleotides in the order of C, C, and A to the tRNA nucleotide-73, using CTP and ATP as substrates and producing inorganic pyrophosphate. tRNA 3'-terminal CCA addition is required both for tRNA processing and repair. Also involved in tRNA surveillance by mediating tandem CCA addition to generate a CCACCA at the 3' terminus of unstable tRNAs. While stable tRNAs receive only 3'-terminal CCA, unstable tRNAs are marked with CCACCA and rapidly degraded. In Methanococcus maripaludis (strain DSM 14266 / JCM 13030 / NBRC 101832 / S2 / LL), this protein is CCA-adding enzyme.